Here is a 303-residue protein sequence, read N- to C-terminus: Probable 5-dehydro-4-deoxyglucarate dehydratase (303 aa).

The protein belongs to the DapA family.

The catalysed reaction is 5-dehydro-4-deoxy-D-glucarate + H(+) = 2,5-dioxopentanoate + CO2 + H2O. Its pathway is carbohydrate acid metabolism; D-glucarate degradation; 2,5-dioxopentanoate from D-glucarate: step 2/2. This chain is Probable 5-dehydro-4-deoxyglucarate dehydratase, found in Acinetobacter baylyi (strain ATCC 33305 / BD413 / ADP1).